The primary structure comprises 487 residues: Serine/threonine-protein kinase BSK7 (487 aa).

A lipid anchor (N-myristoyl glycine) is attached at Gly-2. The Protein kinase domain maps to 59–325 (ENIVSEHGEK…DLETPSHQLM (267 aa)). ATP-binding positions include 65 to 73 (HGEKAPNVV) and Lys-87. The active-site Proton acceptor is Asp-181.

It belongs to the protein kinase superfamily. Ser/Thr protein kinase family.

It localises to the cell membrane. It catalyses the reaction L-seryl-[protein] + ATP = O-phospho-L-seryl-[protein] + ADP + H(+). The enzyme catalyses L-threonyl-[protein] + ATP = O-phospho-L-threonyl-[protein] + ADP + H(+). Functionally, probable serine/threonine kinase that acts as a positive regulator of brassinosteroid (BR) signaling downstream of the receptor kinase BRI1. Functions redundantly with BSK3, BSK5, BSK6 and BSK8. This Arabidopsis thaliana (Mouse-ear cress) protein is Serine/threonine-protein kinase BSK7.